Here is a 335-residue protein sequence, read N- to C-terminus: Adenosine deaminase (335 aa).

2 residues coordinate Zn(2+): histidine 12 and histidine 14. 2 residues coordinate substrate: histidine 14 and aspartate 16. Histidine 197 provides a ligand contact to Zn(2+). The active-site Proton donor is the glutamate 200. Aspartate 278 lines the Zn(2+) pocket.

This sequence belongs to the metallo-dependent hydrolases superfamily. Adenosine and AMP deaminases family. Adenosine deaminase subfamily. Zn(2+) is required as a cofactor.

It carries out the reaction adenosine + H2O + H(+) = inosine + NH4(+). It catalyses the reaction 2'-deoxyadenosine + H2O + H(+) = 2'-deoxyinosine + NH4(+). In terms of biological role, catalyzes the hydrolytic deamination of adenosine and 2-deoxyadenosine. The protein is Adenosine deaminase of Clostridium botulinum (strain Kyoto / Type A2).